The sequence spans 438 residues: MTPAFRRADLTGFLRTYGAALILLLAAMLAWQPAQAQLRVDISGTGATQYPVAIADFAVDDTHGRALAEVIRADLTRTGQFRLINAAGSGLNVDSQVAHDDWRAKGADFLAYGSITRGPDGRYDVRYRLADTVKKGQLDGVAFSGTEQELRRVAHQIADRIYEKITGVRGVFSTRIAYVLKRGSTYELQVADADGQNPQVALRSREPIISPSWSPDGSRLAYVSFESGKPVVYVHTLATSARIPVANFKGNNSAPAWSPDGSQLAVALTRDGLSQIYIVSAGGGSNMRRITRSPGIDTEPNFTPDGRSIIFTSDRSGGPQIYQTGLDGGDARRLTFNGGYNISPRISPDGSTLLYVARRDGAFRIASLNLSSGSETLLTDGRDDQSPSFAPNGMQVLYAAIQNGRSVLAGVSSDGRVRQTLSVLNGEIREPTWGPFTR.

The first 36 residues, 1-36 (MTPAFRRADLTGFLRTYGAALILLLAAMLAWQPAQA), serve as a signal peptide directing secretion.

Belongs to the TolB family. The Tol-Pal system is composed of five core proteins: the inner membrane proteins TolA, TolQ and TolR, the periplasmic protein TolB and the outer membrane protein Pal. They form a network linking the inner and outer membranes and the peptidoglycan layer.

The protein resides in the periplasm. In terms of biological role, part of the Tol-Pal system, which plays a role in outer membrane invagination during cell division and is important for maintaining outer membrane integrity. The polypeptide is Tol-Pal system protein TolB (Bordetella pertussis (strain Tohama I / ATCC BAA-589 / NCTC 13251)).